The following is a 303-amino-acid chain: 2-(5''-triphosphoribosyl)-3'-dephosphocoenzyme-A synthase (303 aa).

Belongs to the CitG/MdcB family.

It catalyses the reaction 3'-dephospho-CoA + ATP = 2'-(5''-triphospho-alpha-D-ribosyl)-3'-dephospho-CoA + adenine. In terms of biological role, catalyzes the formation of 2-(5''-triphosphoribosyl)-3'-dephosphocoenzyme-A, the precursor of the prosthetic group of the holo-acyl carrier protein (gamma chain) of citrate lyase, from ATP and dephospho-CoA. The protein is 2-(5''-triphosphoribosyl)-3'-dephosphocoenzyme-A synthase of Escherichia fergusonii (strain ATCC 35469 / DSM 13698 / CCUG 18766 / IAM 14443 / JCM 21226 / LMG 7866 / NBRC 102419 / NCTC 12128 / CDC 0568-73).